Here is a 169-residue protein sequence, read N- to C-terminus: General odorant-binding protein 57a (169 aa).

The first 20 residues, 1–20 (MFNTRLAIFLLLIVVSLSQA), serve as a signal peptide directing secretion. Intrachain disulfides connect Cys-39–Cys-77, Cys-73–Cys-120, and Cys-111–Cys-129.

It belongs to the PBP/GOBP family.

Present in the aqueous fluid surrounding olfactory sensory dendrites and are thought to aid in the capture and transport of hydrophobic odorants into and through this fluid. The chain is General odorant-binding protein 57a from Drosophila melanogaster (Fruit fly).